Reading from the N-terminus, the 323-residue chain is tRNA U34 carboxymethyltransferase (323 aa).

Carboxy-S-adenosyl-L-methionine contacts are provided by residues Lys91, Trp105, Lys110, Gly130, Ile181 to Glu182, Met196, Tyr200, and Arg315.

The protein belongs to the class I-like SAM-binding methyltransferase superfamily. CmoB family. In terms of assembly, homotetramer.

It catalyses the reaction carboxy-S-adenosyl-L-methionine + 5-hydroxyuridine(34) in tRNA = 5-carboxymethoxyuridine(34) in tRNA + S-adenosyl-L-homocysteine + H(+). Catalyzes carboxymethyl transfer from carboxy-S-adenosyl-L-methionine (Cx-SAM) to 5-hydroxyuridine (ho5U) to form 5-carboxymethoxyuridine (cmo5U) at position 34 in tRNAs. This chain is tRNA U34 carboxymethyltransferase, found in Yersinia pseudotuberculosis serotype IB (strain PB1/+).